The chain runs to 238 residues: 7-carboxy-7-deazaguanine synthase (238 aa).

Substrate is bound by residues 14–16 (IQG) and R29. In terms of domain architecture, Radical SAM core spans 20 to 234 (VVGQKTMFIR…PQLHALVWGN (215 aa)). The [4Fe-4S] cluster site is built by C33, C37, and C40. S42 serves as a coordination point for Mg(2+). S80 is a binding site for substrate. Residues G82 and 126 to 128 (SPK) each bind S-adenosyl-L-methionine.

This sequence belongs to the radical SAM superfamily. 7-carboxy-7-deazaguanine synthase family. In terms of assembly, homodimer. It depends on [4Fe-4S] cluster as a cofactor. S-adenosyl-L-methionine is required as a cofactor. Requires Mg(2+) as cofactor.

The catalysed reaction is 6-carboxy-5,6,7,8-tetrahydropterin + H(+) = 7-carboxy-7-deazaguanine + NH4(+). It participates in purine metabolism; 7-cyano-7-deazaguanine biosynthesis. Functionally, catalyzes the complex heterocyclic radical-mediated conversion of 6-carboxy-5,6,7,8-tetrahydropterin (CPH4) to 7-carboxy-7-deazaguanine (CDG), a step common to the biosynthetic pathways of all 7-deazapurine-containing compounds. The polypeptide is 7-carboxy-7-deazaguanine synthase (Bacillus cereus (strain ATCC 14579 / DSM 31 / CCUG 7414 / JCM 2152 / NBRC 15305 / NCIMB 9373 / NCTC 2599 / NRRL B-3711)).